A 486-amino-acid polypeptide reads, in one-letter code: Cysteine--tRNA ligase (486 aa).

Residue Cys-29 coordinates Zn(2+). The short motif at 31–41 is the 'HIGH' region element; it reads ITVYDYCHLGH. Residues Cys-215, His-240, and Glu-244 each contribute to the Zn(2+) site. Positions 272 to 276 match the 'KMSKS' region motif; that stretch reads KMSKS. Lys-275 serves as a coordination point for ATP.

It belongs to the class-I aminoacyl-tRNA synthetase family. As to quaternary structure, monomer. It depends on Zn(2+) as a cofactor.

The protein resides in the cytoplasm. It catalyses the reaction tRNA(Cys) + L-cysteine + ATP = L-cysteinyl-tRNA(Cys) + AMP + diphosphate. This Gloeothece citriformis (strain PCC 7424) (Cyanothece sp. (strain PCC 7424)) protein is Cysteine--tRNA ligase.